Reading from the N-terminus, the 203-residue chain is IQ domain-containing protein F3 (203 aa).

Basic and acidic residues predominate over residues 1-12 (MELDQDKKKETP). The tract at residues 1 to 111 (MELDQDKKKE…CETQEADRSE (111 aa)) is disordered. Residues 13–82 (EETENVNEVQ…EADKAILERS (70 aa)) are a coiled coil. Over residues 29–38 (DEETEAEAEE) the composition is skewed to acidic residues. The span at 39-51 (ADKAILERSDSVK) shows a compositional bias: basic and acidic residues. Residues 64–73 (DEETEAEAEE) show a composition bias toward acidic residues. 2 stretches are compositionally biased toward basic and acidic residues: residues 74–86 (ADKAILERSDSVK) and 96–111 (QIQEEKCETQEADRSE). The IQ domain occupies 129 to 158 (VMLAGVKIQAWWRGTLVRRTLLLAALNAWT).

The protein is IQ domain-containing protein F3 (Iqcf3) of Mus musculus (Mouse).